Here is a 624-residue protein sequence, read N- to C-terminus: ABC transporter G family member 23 (624 aa).

The 245-residue stretch at 52–296 folds into the ABC transporter domain; it reads LTVTNLSYTI…IAKLGFQIPE (245 aa). 84–91 contributes to the ATP binding site; the sequence is GPSGTGKS. Residues 350–560 form the ABC transmembrane type-2 domain; that stretch reads TEISYLCSRF…PLESMVVNEY (211 aa). Helical transmembrane passes span 369–389, 402–422, 450–470, 480–500, 511–531, and 595–615; these read LFLA…SVYT, LGLF…ALPI, IAFV…VYWI, FSFF…LVLF, GNSL…YFIP, and INVG…WGIL.

The protein belongs to the ABC transporter superfamily. ABCG family. Eye pigment precursor importer (TC 3.A.1.204) subfamily.

It localises to the membrane. The polypeptide is ABC transporter G family member 23 (ABCG23) (Arabidopsis thaliana (Mouse-ear cress)).